A 172-amino-acid polypeptide reads, in one-letter code: MNSDKLVAIGKIAGTYGYAGWLKVIPLTDFPERFYKLDKVILNQGGKLGTFLVDGLKAHNNFYLFKFSGIDTVEVAQGFQNGILQIDESELYPLPEGYFYHFQLQGLSVYDEEKGLLGELTDIIETGANDVYVVDSPQYGEILIPAIKDVILAVKLEEKRMEIKLLPGLIED.

In terms of domain architecture, PRC barrel spans 96-169; it reads EGYFYHFQLQ…RMEIKLLPGL (74 aa).

The protein belongs to the RimM family. As to quaternary structure, binds ribosomal protein uS19.

The protein localises to the cytoplasm. In terms of biological role, an accessory protein needed during the final step in the assembly of 30S ribosomal subunit, possibly for assembly of the head region. Essential for efficient processing of 16S rRNA. May be needed both before and after RbfA during the maturation of 16S rRNA. It has affinity for free ribosomal 30S subunits but not for 70S ribosomes. The chain is Ribosome maturation factor RimM from Syntrophomonas wolfei subsp. wolfei (strain DSM 2245B / Goettingen).